A 550-amino-acid chain; its full sequence is MAQVINTNSLSLITQNNINKNQSALSSSIERLSSGLRINSAKDDAAGQAIANRFTSNIKGLTQAARNANDGISVAQTTEGALSEINNNLQRIRELTVQASTGTNSDSDLDSIQDEIKSRLDEIDRVSGQTQFNGVNVLAKDGSMKIQVGANDGQTITIDLKKIDSDTLGLNGFNVNGGGAVANTAASKADLVAANATVVGNKYTVSAGYDAAKASDLLAGVSDGDTVQATINNGFGTAASATNYKYDSASKSYSFDTTTASAADVQKYLTPGVGDTAKGTITIDGSAQDVQISSDGKITASNGDKLYIDTTGRLTKNGSGASLTEASLSTLAANNTKATTIDIGGTSISFTGNSTTPDTITYSVTGAKVDQAAFDKAVSTSGNNVDFTTAGYSVNGTTGAVTKGVDSVYVDNNEALTTSDTVDFYLQDDGSVTNGSGKAVYKDADGKLTTDAETKAATTADPLKALDEAISSIDKFRSSLGAVQNRLDSAVTNLNNTTTNLSEAQSRIQDADYATEVSNMSKAQIIQQAGNSVLAKANQVPQQVLSLLQG.

Belongs to the bacterial flagellin family.

It is found in the secreted. The protein resides in the bacterial flagellum. Its function is as follows. Flagellin is the subunit protein which polymerizes to form the filaments of bacterial flagella. The polypeptide is Flagellin (fliC) (Shigella flexneri).